The following is a 374-amino-acid chain: SH2 domain-containing protein 2A (374 aa).

Positions 116 to 207 (WFHGFITRRE…PYGEILTQPL (92 aa)) constitute an SH2 domain. The interval 213-232 (EPAGLSLRADSDSGSKRQDP) is disordered. Residues 221–232 (ADSDSGSKRQDP) are compositionally biased toward basic and acidic residues. S237 is subject to Phosphoserine. Residues 241–301 (QQGQAQASGH…QAPPINPIYQ (61 aa)) are disordered. Positions 256–266 (ASQQKATSQAS) are enriched in polar residues. The SH3-binding signature appears at 267 to 273 (RPRPPIP). A compositionally biased stretch (pro residues) spans 268–279 (PRPPIPAKPQLP). The residue at position 316 (S316) is a Phosphoserine. Disordered stretches follow at residues 321–340 (PSNIYAEVEGPSGTAPIGHP) and 353–374 (GQVREVQGKISSRSRAERGSPS).

Interacts with KDR. Interacts with p56-LCK, TXK and ITK. Post-translationally, phosphorylated on tyrosine residues upon TCR-stimulation. Expression limited to tissues of the immune system and, in particular, activated T-cells and natural killer cells. Expressed in the thymus, lymph node, and to a lesser extent, in the spleen and bone marrow. According to PubMed:10553045, also expressed in the lung.

Its subcellular location is the cytoplasm. It localises to the cell membrane. Functionally, could be a T-cell-specific adapter protein involved in the control of T-cell activation. May play a role in p56-LCK-mediated T-cell signaling. Could be involved in the regulation of responses to T-cell activation stimuli, specifically proliferation and lymphokine production. Interactions with ITK and TXK may provide important biochemical links of these two important kinases with other components in the T-cell activation machinery. The protein is SH2 domain-containing protein 2A (Sh2d2a) of Mus musculus (Mouse).